Consider the following 637-residue polypeptide: MYHISAEDIYLFHQGTNFESHQFLGCHEINWKGKRGYRFAVWAPNALKVCVVGDFNNWEENSHPLEKFTDEGLWGGFIADIPPATSYKYHICSSEDTSILKADPFATQAERRPKTASVIPAANGYQWSDDQWIEQRNTYDPYSSPISIYEVHLGTWKKTLKKQFLSYRELATQLIPYVKSLGYTHIELLPINEHPFDRSWGYQITGYFAVTSRYGNPSDFKYFIDQCHQHQIGVILDWVPGHFCKDDFGLRQFDGAPLYEYRDPKKSEKKSWGTLAFDYGRPEVQSFLISNAIYWLKEFHIDGLRVDAVASMLYLNFDRYDEEEKIYNTYGGEENLEAFAFLRKLNKVVFSYIPGALMMAEDSSDLPLVTAPVNKGGLGFNYKWNMGWMNDLLSFMEKESIHRKWHHNRLTFSFMYTYSENYLLPLSHDEVVHGKKSLLDKMPGDQWQQFANLRLLYGYMYTHPGKKLVFMGGELAQYAEWKDTEELDWHLLEYPLHKGIYHYIKNLNELYQQHPELYELDHLSEGFEWIDPHNIDQSVIAFRRKANKPNQELIIICNFTPQVHFDYKIGVPESGRYKEIFNSDSVRFGGSGQINEGEHFSFPEKWHGLSQHIKIKVPPLAISVFQIEVERERLPRE.

D307 serves as the catalytic Nucleophile. Catalysis depends on E361, which acts as the Proton donor.

Belongs to the glycosyl hydrolase 13 family. GlgB subfamily. In terms of assembly, monomer.

The catalysed reaction is Transfers a segment of a (1-&gt;4)-alpha-D-glucan chain to a primary hydroxy group in a similar glucan chain.. It functions in the pathway glycan biosynthesis; glycogen biosynthesis. In terms of biological role, catalyzes the formation of the alpha-1,6-glucosidic linkages in glycogen by scission of a 1,4-alpha-linked oligosaccharide from growing alpha-1,4-glucan chains and the subsequent attachment of the oligosaccharide to the alpha-1,6 position. The sequence is that of 1,4-alpha-glucan branching enzyme GlgB from Oceanobacillus iheyensis (strain DSM 14371 / CIP 107618 / JCM 11309 / KCTC 3954 / HTE831).